Here is a 668-residue protein sequence, read N- to C-terminus: Nuclear pore complex protein Nup75 (668 aa).

It belongs to the nucleoporin Nup85 family. Component of the nuclear pore complex (NPC). Component of the NPC Nup107-160 subcomplex.

It is found in the nucleus. Its subcellular location is the nuclear pore complex. It localises to the nucleus membrane. In terms of biological role, component of the nuclear pore complex (NPC) that seems to be required for NPC assembly and maintenance. Required for nuclear import of phosphorylated Mad via importin msk. Has no role in classical nuclear localization signal (cNLS)-dependent nuclear import via importin-beta. Facilitates the interaction between Nup93 and sec13 with msk. This chain is Nuclear pore complex protein Nup75, found in Drosophila melanogaster (Fruit fly).